A 107-amino-acid polypeptide reads, in one-letter code: Large ribosomal subunit protein P1 (107 aa).

A compositionally biased stretch (low complexity) spans 67 to 82 (GPASAAPAGAAGAAAP). Residues 67 to 107 (GPASAAPAGAAGAAAPAEEKAEEKEEEKEESDEDMGFGLFD) are disordered. The segment covering 90–101 (KEEEKEESDEDM) has biased composition (acidic residues).

It belongs to the eukaryotic ribosomal protein P1/P2 family. In terms of assembly, P1 and P2 exist as dimers at the large ribosomal subunit.

The protein localises to the cytoplasm. In terms of biological role, plays an important role in the elongation step of protein synthesis. The protein is Large ribosomal subunit protein P1 of Penicillium crustosum (Blue mold fungus).